A 101-amino-acid polypeptide reads, in one-letter code: Small ribosomal subunit protein uS14 (101 aa).

It belongs to the universal ribosomal protein uS14 family. In terms of assembly, part of the 30S ribosomal subunit. Contacts proteins S3 and S10.

In terms of biological role, binds 16S rRNA, required for the assembly of 30S particles and may also be responsible for determining the conformation of the 16S rRNA at the A site. The sequence is that of Small ribosomal subunit protein uS14 from Orientia tsutsugamushi (strain Boryong) (Rickettsia tsutsugamushi).